The sequence spans 257 residues: Nickel import system ATP-binding protein NikD (257 aa).

Residues 4-245 (IDIQNLTIKN…HLHPYTERLI (242 aa)) form the ABC transporter domain. 37 to 44 (GESGAGKS) contacts ATP.

Belongs to the ABC transporter superfamily. The complex is composed of two ATP-binding proteins (NikD and NikE), two transmembrane proteins (NikB and NikC) and a solute-binding protein (NikA).

The protein resides in the cell membrane. The catalysed reaction is Ni(2+)(out) + ATP + H2O = Ni(2+)(in) + ADP + phosphate + H(+). Part of the ABC transporter complex NikABCDE (Opp2) involved in nickel import. Probably responsible for energy coupling to the transport system. The chain is Nickel import system ATP-binding protein NikD from Staphylococcus aureus (strain MRSA252).